The following is a 430-amino-acid chain: UDP-N-acetylglucosamine 1-carboxyvinyltransferase 1 (430 aa).

22-23 (KN) is a binding site for phosphoenolpyruvate. A UDP-N-acetyl-alpha-D-glucosamine-binding site is contributed by R93. C117 serves as the catalytic Proton donor. C117 carries the post-translational modification 2-(S-cysteinyl)pyruvic acid O-phosphothioketal. UDP-N-acetyl-alpha-D-glucosamine is bound by residues 122–126 (RPVDL), D305, and V327.

The protein belongs to the EPSP synthase family. MurA subfamily.

It is found in the cytoplasm. It catalyses the reaction phosphoenolpyruvate + UDP-N-acetyl-alpha-D-glucosamine = UDP-N-acetyl-3-O-(1-carboxyvinyl)-alpha-D-glucosamine + phosphate. The protein operates within cell wall biogenesis; peptidoglycan biosynthesis. Functionally, cell wall formation. Adds enolpyruvyl to UDP-N-acetylglucosamine. In Listeria monocytogenes serovar 1/2a (strain ATCC BAA-679 / EGD-e), this protein is UDP-N-acetylglucosamine 1-carboxyvinyltransferase 1.